The following is a 287-amino-acid chain: Bifunctional protein FolD (287 aa).

Residues 166 to 168 (GAS) and isoleucine 232 each bind NADP(+).

The protein belongs to the tetrahydrofolate dehydrogenase/cyclohydrolase family. Homodimer.

It carries out the reaction (6R)-5,10-methylene-5,6,7,8-tetrahydrofolate + NADP(+) = (6R)-5,10-methenyltetrahydrofolate + NADPH. The enzyme catalyses (6R)-5,10-methenyltetrahydrofolate + H2O = (6R)-10-formyltetrahydrofolate + H(+). Its pathway is one-carbon metabolism; tetrahydrofolate interconversion. Its function is as follows. Catalyzes the oxidation of 5,10-methylenetetrahydrofolate to 5,10-methenyltetrahydrofolate and then the hydrolysis of 5,10-methenyltetrahydrofolate to 10-formyltetrahydrofolate. The protein is Bifunctional protein FolD of Aeromonas hydrophila subsp. hydrophila (strain ATCC 7966 / DSM 30187 / BCRC 13018 / CCUG 14551 / JCM 1027 / KCTC 2358 / NCIMB 9240 / NCTC 8049).